Reading from the N-terminus, the 73-residue chain is Small ribosomal subunit protein bS18c (73 aa).

It belongs to the bacterial ribosomal protein bS18 family. In terms of assembly, part of the 30S ribosomal subunit.

It is found in the plastid. Its subcellular location is the chloroplast. The chain is Small ribosomal subunit protein bS18c from Nephroselmis olivacea (Green alga).